Consider the following 302-residue polypeptide: Light-independent protochlorophyllide reductase iron-sulfur ATP-binding protein (302 aa).

Polar residues predominate over residues 1–10; the sequence is MSTATISPSQ. A disordered region spans residues 1 to 21; sequence MSTATISPSQIGRGARPDGEG. ATP-binding positions include 46–51 and lysine 75; that span reads GIGKST. Serine 50 provides a ligand contact to Mg(2+). [4Fe-4S] cluster contacts are provided by cysteine 131 and cysteine 165. ATP contacts are provided by residues 216-217 and 240-242; these read NR and PAL.

This sequence belongs to the NifH/BchL/ChlL family. In terms of assembly, homodimer. Protochlorophyllide reductase is composed of three subunits; BchL, BchN and BchB. [4Fe-4S] cluster serves as cofactor.

The catalysed reaction is chlorophyllide a + oxidized 2[4Fe-4S]-[ferredoxin] + 2 ADP + 2 phosphate = protochlorophyllide a + reduced 2[4Fe-4S]-[ferredoxin] + 2 ATP + 2 H2O. Its pathway is porphyrin-containing compound metabolism; bacteriochlorophyll biosynthesis (light-independent). In terms of biological role, component of the dark-operative protochlorophyllide reductase (DPOR) that uses Mg-ATP and reduced ferredoxin to reduce ring D of protochlorophyllide (Pchlide) to form chlorophyllide a (Chlide). This reaction is light-independent. The L component serves as a unique electron donor to the NB-component of the complex, and binds Mg-ATP. The sequence is that of Light-independent protochlorophyllide reductase iron-sulfur ATP-binding protein from Rubrivivax gelatinosus (strain NBRC 100245 / IL144).